Reading from the N-terminus, the 709-residue chain is DCC-interacting protein 13-alpha (709 aa).

Residues 1 to 428 (MPGIDKLPIE…RPPTARTSSS (428 aa)) are required for RAB5A binding. Residues 3 to 268 (GIDKLPIEET…DPLYVPDPDP (266 aa)) form the BAR domain. The stretch at 215-259 (SENLNEQLEEFLANIGTSVQNVRREMDSDIETMQQTIEDLEVASD) forms a coiled coil. The region spanning 277-375 (LTRKAGYLNA…WICTINNISK (99 aa)) is the PH domain. 3 disordered regions span residues 397–434 (AVTP…LGSE), 467–491 (GQAK…STKS), and 645–709 (VKEK…ESEA). The residue at position 399 (threonine 399) is a Phosphothreonine. Serine 401 carries the post-translational modification Phosphoserine. The short motif at 403–414 (SFQQRHESLRPA) is the F&amp;H element. Phosphoserine; by PKA is present on serine 410. The PID domain maps to 496-656 (SILHQLFIVR…EKQQKELNKQ (161 aa)). A coiled-coil region spans residues 621-673 (LAKQIALHAELDRRASEKQKEIERVKEKQQKELNKQKQIEKDLEEQSRLIAAS). The segment covering 645-667 (VKEKQQKELNKQKQIEKDLEEQS) has biased composition (basic and acidic residues). Positions 674–693 (SRPNQASSEGQFVVLSSSQS) are enriched in polar residues. Phosphoserine is present on residues serine 693 and serine 696. Over residues 700–709 (EGGKKRESEA) the composition is skewed to basic and acidic residues.

Homodimer. Binds RAB5A/Rab5 through an N-terminal domain. This interaction is essential for its recruitment to endosomal membranes as well as its role in cell proliferation. Binds DCC and the catalytic domain of the inactive form of AKT2 through its PID domain. Binds PIK3CA and subunits of the NuRD/MeCP1 complex. Interacts with OCRL and INPP5B. Interacts with NTRK2. Interacts with APPL2; interaction is independent of follicle stimulating hormone stimulation; interaction is decreased by adiponectin in a time-dependent manner. Forms a complex with APPL2 and RUVBL2. Forms a complex comprising APPL2, RUVBL2, CTNNB1, HDAC1 and HDAC2; interaction reduces interaction between CTNNB1, HDAC1, HDAC2 and RUVBL2 leading to the decrease of deacetylase activity of this complex; affects the recruitment of repressive complexes to the Wnt target genes. Interacts with ANXA2. Interacts with TGFBR1; interaction is TGF beta dependent; mediates trafficking of the TGFBR1 from the endosomes to the nucleus via microtubules in a TRAF6-dependent manner. Interacts with PRKCZ. Interacts with PIK3R1 and APPL2. Interacts with ADIPOR1; ADIPOQ enhances this interaction; inhibites adiponectin-stimulated binding of APPL2 to ADIPOR1. Phosphorylation at Ser-410 by PKA severely impairs binding to OCRL. In terms of tissue distribution, high levels in heart, ovary, pancreas and skeletal muscle.

Its subcellular location is the early endosome membrane. It localises to the nucleus. The protein resides in the cytoplasm. The protein localises to the endosome. It is found in the cell projection. Its subcellular location is the ruffle. It localises to the cytoplasmic vesicle. The protein resides in the phagosome. Functionally, multifunctional adapter protein that binds to various membrane receptors, nuclear factors and signaling proteins to regulate many processes, such as cell proliferation, immune response, endosomal trafficking and cell metabolism. Regulates signaling pathway leading to cell proliferation through interaction with RAB5A and subunits of the NuRD/MeCP1 complex. Functions as a positive regulator of innate immune response via activation of AKT1 signaling pathway by forming a complex with APPL1 and PIK3R1. Inhibits Fc-gamma receptor-mediated phagocytosis through PI3K/Akt signaling in macrophages. Regulates TLR4 signaling in activated macrophages. Involved in trafficking of the TGFBR1 from the endosomes to the nucleus via microtubules in a TRAF6-dependent manner. Plays a role in cell metabolism by regulating adiponecting and insulin signaling pathways. Required for fibroblast migration through HGF cell signaling. Positive regulator of beta-catenin/TCF-dependent transcription through direct interaction with RUVBL2/reptin resulting in the relief of RUVBL2-mediated repression of beta-catenin/TCF target genes by modulating the interactions within the beta-catenin-reptin-HDAC complex. The polypeptide is DCC-interacting protein 13-alpha (Homo sapiens (Human)).